Here is a 6668-residue protein sequence, read N- to C-terminus: Centrosome-associated protein CEP250 (6668 aa).

20 coiled-coil regions span residues 562-589 (KAFHEAQLARAREETKTLRQKIAALQQD), 632-666 (TRELTERLQAALAVNESLREELLEARQQLSLLRAS), 873-988 (HTEC…LRSS), 1042-1087 (LRMS…HEAA), 1252-1307 (VEDL…AVSR), 1333-1427 (LESL…LEKK), 1501-1538 (RPAAEEAVERETNLKKELEAAHQQKNEAEEMCKELGTQ), 1594-1688 (REAL…SEVA), 1896-1930 (HDILVGRVEELERMQTELEEQRRMLTKHLQQTTEK), 1975-2224 (EETL…AKQS), 2298-3272 (AEDE…LKME), 3298-3436 (QQEL…SRAE), 3526-3599 (LVQL…AKEE), 3697-3773 (CASL…EERR), 3856-4137 (TEML…VEAE), 4170-4486 (RRKL…LRER), 4515-5078 (LETL…FRRR), 5165-5202 (LASLGQELEEERWQVKQLQELLKEVDSARKEALEQETL), 5298-5731 (LREK…QHRV), and 5927-6119 (TQAL…LWRQ).

Proteolytically cleaved; only the full-length form localizes to the inner core, while processed version also localizes to the outer core during the onset of cell division.

The protein resides in the cytoplasm. It is found in the cytoskeleton. Its subcellular location is the microtubule organizing center. The protein localises to the centrosome. Its function is as follows. Part of the centrosome inner core complex. Required for the linking of centrosomal inner and outer cores. The protein is Centrosome-associated protein CEP250 of Toxoplasma gondii (strain ATCC 50611 / Me49).